The sequence spans 695 residues: UvrABC system protein B (695 aa).

The region spanning 45–434 (EGIEDGLSFQ…QVVEQVVRPT (390 aa)) is the Helicase ATP-binding domain. 58 to 65 (GVTGSGKT) contributes to the ATP binding site. The Beta-hairpin signature appears at 111–134 (YYDYYQPEAYVPQRDLFIEKDSSI). The region spanning 449–602 (QVDDLLSEIN…QMAFNEANGI (154 aa)) is the Helicase C-terminal domain. Residues 646-681 (SKEIKRLEKLMMDHAKNLEFEKAAQVRDQLAKLKAQ) form the UVR domain.

Belongs to the UvrB family. Forms a heterotetramer with UvrA during the search for lesions. Interacts with UvrC in an incision complex.

Its subcellular location is the cytoplasm. The UvrABC repair system catalyzes the recognition and processing of DNA lesions. A damage recognition complex composed of 2 UvrA and 2 UvrB subunits scans DNA for abnormalities. Upon binding of the UvrA(2)B(2) complex to a putative damaged site, the DNA wraps around one UvrB monomer. DNA wrap is dependent on ATP binding by UvrB and probably causes local melting of the DNA helix, facilitating insertion of UvrB beta-hairpin between the DNA strands. Then UvrB probes one DNA strand for the presence of a lesion. If a lesion is found the UvrA subunits dissociate and the UvrB-DNA preincision complex is formed. This complex is subsequently bound by UvrC and the second UvrB is released. If no lesion is found, the DNA wraps around the other UvrB subunit that will check the other stand for damage. The polypeptide is UvrABC system protein B (Cupriavidus pinatubonensis (strain JMP 134 / LMG 1197) (Cupriavidus necator (strain JMP 134))).